We begin with the raw amino-acid sequence, 498 residues long: Zinc finger protein 497 (498 aa).

Residues 30-104 are disordered; sequence SEGAVSGGWG…LRPSPLPEEP (75 aa). C2H2-type zinc fingers lie at residues 106-128, 134-156, 162-184, 190-212, 218-240, 246-268, 274-296, 302-324, 330-352, 358-380, 386-408, 414-436, 442-464, and 470-492; these read CRCG…RRVH, YTCP…QRIH, YACR…QETH, FRCP…RRTH, YECP…RRVH, HACR…LKIH, HACP…RRTH, FPCA…QRTH, FECA…RRVH, HACA…RRTH, FACA…RLSH, FACA…QRLH, FVCA…RRTH, and YACG…QKRH.

It belongs to the krueppel C2H2-type zinc-finger protein family.

It localises to the nucleus. Its function is as follows. May be involved in transcriptional regulation. The sequence is that of Zinc finger protein 497 (ZNF497) from Homo sapiens (Human).